The following is a 270-amino-acid chain: Glutamate racemase (270 aa).

Substrate is bound by residues 15 to 16 and 47 to 48; these read DS and YG. Residue C78 is the Proton donor/acceptor of the active site. 79 to 80 serves as a coordination point for substrate; it reads NT. C189 serves as the catalytic Proton donor/acceptor. 190–191 is a substrate binding site; sequence TH.

It belongs to the aspartate/glutamate racemases family.

The enzyme catalyses L-glutamate = D-glutamate. It functions in the pathway cell wall biogenesis; peptidoglycan biosynthesis. Functionally, provides the (R)-glutamate required for cell wall biosynthesis. This chain is Glutamate racemase, found in Syntrophus aciditrophicus (strain SB).